A 244-amino-acid polypeptide reads, in one-letter code: ATP-dependent dethiobiotin synthetase BioD 1 (244 aa).

12-17 (NVGKTV) provides a ligand contact to ATP. Position 16 (T16) interacts with Mg(2+). K37 is an active-site residue. D68 serves as a coordination point for ATP. Mg(2+) is bound by residues D68 and E126. ATP is bound by residues 186 to 187 (NR), 215 to 217 (PYL), and E222.

The protein belongs to the dethiobiotin synthetase family. In terms of assembly, homodimer. It depends on Mg(2+) as a cofactor.

The protein localises to the cytoplasm. The enzyme catalyses (7R,8S)-7,8-diammoniononanoate + CO2 + ATP = (4R,5S)-dethiobiotin + ADP + phosphate + 3 H(+). It participates in cofactor biosynthesis; biotin biosynthesis; biotin from 7,8-diaminononanoate: step 1/2. Catalyzes a mechanistically unusual reaction, the ATP-dependent insertion of CO2 between the N7 and N8 nitrogen atoms of 7,8-diaminopelargonic acid (DAPA, also called 7,8-diammoniononanoate) to form a ureido ring. The protein is ATP-dependent dethiobiotin synthetase BioD 1 of Pasteurella multocida (strain Pm70).